Here is a 644-residue protein sequence, read N- to C-terminus: Chaperone protein DnaK (644 aa).

Thr199 carries the phosphothreonine; by autocatalysis modification. A disordered region spans residues 603-644 (YAKKSSEGQAAQGQTQSQESTKPAEEGVVDAEFEEVKEEDKK). Over residues 609 to 623 (EGQAAQGQTQSQEST) the composition is skewed to polar residues. The segment covering 629-644 (GVVDAEFEEVKEEDKK) has biased composition (acidic residues).

Belongs to the heat shock protein 70 family.

Functionally, acts as a chaperone. The protein is Chaperone protein DnaK of Legionella pneumophila (strain Corby).